The primary structure comprises 224 residues: Zinc finger protein 22 (224 aa).

Residues 1–34 (MRLAKPKAGISRSSSQGKAYENKRKTGRQRQKWG) are disordered. An N6-acetyllysine mark is found at K18 and K23. S49 carries the post-translational modification Phosphoserine. C2H2-type zinc fingers lie at residues 55-77 (YKCT…QKIH), 83-105 (HKCA…RRIH), 111-133 (YKCD…QRIH), 139-161 (YQCD…QRTH), and 167-189 (YQCS…MKVH).

It belongs to the krueppel C2H2-type zinc-finger protein family. As to expression, in the embryo, expressed in developing craniofacial structures including dental epithelium of maxillary molar tooth organs, tongue epithelium and muscle, and craniofacial bone osteoblasts. In the adult, expressed in mesoderm-derived tissues such as skeletal muscle, heart, kidney and liver. Intermediate expression in spleen, thymus and brain. Low levels in endoderm-derived tissues such as intestine and colon.

It is found in the nucleus. Binds DNA through the consensus sequence 5'-CAATG-3'. May be involved in transcriptional regulation and may play a role in tooth formation. In Homo sapiens (Human), this protein is Zinc finger protein 22 (ZNF22).